A 432-amino-acid polypeptide reads, in one-letter code: 3-phosphoshikimate 1-carboxyvinyltransferase (432 aa).

Residues Lys-23, Ser-24, and Arg-28 each contribute to the 3-phosphoshikimate site. Lys-23 serves as a coordination point for phosphoenolpyruvate. 2 residues coordinate phosphoenolpyruvate: Gly-96 and Arg-125. Ser-170, Gln-172, Asp-318, and Lys-345 together coordinate 3-phosphoshikimate. A phosphoenolpyruvate-binding site is contributed by Gln-172. The Proton acceptor role is filled by Asp-318. Residues Arg-349 and Arg-391 each coordinate phosphoenolpyruvate.

The protein belongs to the EPSP synthase family. Monomer.

It is found in the cytoplasm. The enzyme catalyses 3-phosphoshikimate + phosphoenolpyruvate = 5-O-(1-carboxyvinyl)-3-phosphoshikimate + phosphate. The protein operates within metabolic intermediate biosynthesis; chorismate biosynthesis; chorismate from D-erythrose 4-phosphate and phosphoenolpyruvate: step 6/7. Functionally, catalyzes the transfer of the enolpyruvyl moiety of phosphoenolpyruvate (PEP) to the 5-hydroxyl of shikimate-3-phosphate (S3P) to produce enolpyruvyl shikimate-3-phosphate and inorganic phosphate. The protein is 3-phosphoshikimate 1-carboxyvinyltransferase of Gloeobacter violaceus (strain ATCC 29082 / PCC 7421).